Consider the following 290-residue polypeptide: Porphobilinogen deaminase (290 aa).

At Cys-237 the chain carries S-(dipyrrolylmethanemethyl)cysteine.

This sequence belongs to the HMBS family. As to quaternary structure, monomer. Requires dipyrromethane as cofactor.

The enzyme catalyses 4 porphobilinogen + H2O = hydroxymethylbilane + 4 NH4(+). It participates in porphyrin-containing compound metabolism; protoporphyrin-IX biosynthesis; coproporphyrinogen-III from 5-aminolevulinate: step 2/4. Functionally, tetrapolymerization of the monopyrrole PBG into the hydroxymethylbilane pre-uroporphyrinogen in several discrete steps. In Clostridium botulinum (strain ATCC 19397 / Type A), this protein is Porphobilinogen deaminase.